Reading from the N-terminus, the 138-residue chain is Putative pre-16S rRNA nuclease (138 aa).

The protein belongs to the YqgF nuclease family.

The protein localises to the cytoplasm. Functionally, could be a nuclease involved in processing of the 5'-end of pre-16S rRNA. In Escherichia coli O157:H7, this protein is Putative pre-16S rRNA nuclease.